The sequence spans 554 residues: Glutamine--tRNA ligase (554 aa).

A 'HIGH' region motif is present at residues 34–44 (PEPNGYLHIGH). ATP contacts are provided by residues 35-37 (EPN) and 41-47 (HIGHAKS). Residues Asp67 and Tyr212 each coordinate L-glutamine. ATP-binding positions include Thr231, 261-262 (RL), and 269-271 (MSK). The short motif at 268-272 (VMSKR) is the 'KMSKS' region element. The interaction with tRNA stretch occupies residues 317–324 (TKQDNTIE).

The protein belongs to the class-I aminoacyl-tRNA synthetase family. Monomer.

Its subcellular location is the cytoplasm. The enzyme catalyses tRNA(Gln) + L-glutamine + ATP = L-glutaminyl-tRNA(Gln) + AMP + diphosphate. The polypeptide is Glutamine--tRNA ligase (Escherichia coli O157:H7).